The sequence spans 146 residues: Protein archease (146 aa).

3 residues coordinate Ca(2+): D16, D145, and I146.

The protein belongs to the archease family.

Its function is as follows. Activates the tRNA-splicing ligase complex by facilitating the enzymatic turnover of catalytic subunit RtcB. Acts by promoting the guanylylation of RtcB, a key intermediate step in tRNA ligation. Can also alter the NTP specificity of RtcB such that ATP, dGTP or ITP is used efficiently. The chain is Protein archease from Methanosarcina barkeri (strain Fusaro / DSM 804).